Consider the following 611-residue polypeptide: U-box domain-containing protein 12 (611 aa).

Residues 227–301 (IIPDEFRCPI…SQWCEANGIE (75 aa)) enclose the U-box domain. ARM repeat units follow at residues 355 to 394 (VNNR…NLSI), 396 to 435 (ENNK…SLSV), 437 to 476 (DENK…NLCI), and 478 to 517 (QGNK…ILAG).

It catalyses the reaction S-ubiquitinyl-[E2 ubiquitin-conjugating enzyme]-L-cysteine + [acceptor protein]-L-lysine = [E2 ubiquitin-conjugating enzyme]-L-cysteine + N(6)-ubiquitinyl-[acceptor protein]-L-lysine.. The protein operates within protein modification; protein ubiquitination. Functionally, possesses E3 ubiquitin-protein ligase in vitro. The polypeptide is U-box domain-containing protein 12 (PUB12) (Oryza sativa subsp. japonica (Rice)).